We begin with the raw amino-acid sequence, 511 residues long: MASDSSFPGASSNVAEYSVSEISGALKRTVEDTFGHVRVRGEISGYRGPHSSGHAYFALKDDRARLEAVIWRGSMSRLRFRPEEGMEVIATGKLTTYPGSSKYQIVIEQMEPAGAGALMALLEERKQRLAAEGLFDPALKQLLPFMPRVIGVVTSPTGAVIRDIIHRISDRYPLRVIVWPVRVQGDTCGPEVATAVNGFNTLPDDGPIPRPDVLIVARGGGSLEDLWGFNDEIVVRAVAASHIPVISAVGHETDWTLIDLAADMRAPTPTGAAEMAVPVKADLQASLASQSARLSSAMSRFFDQKRQAHRAAARAMPSADQLLALPRRRFDEAASRLTRALFVNTQKKRVHFDGHARQLSPRLLQRRLVELERGVTMLGQRLPRALEAFLRERQTAFTHRANRLSPEPILRRTRLTGSTLEQLDRRRDQAVRLLIERVKRRSQELDRLMRTLSYESVLERGFAVVFDAQGKPVKQAAAVSPGDALSVRFRDGDVGVVARAGLTIPDPTKGQ.

This sequence belongs to the XseA family. In terms of assembly, heterooligomer composed of large and small subunits.

It is found in the cytoplasm. The catalysed reaction is Exonucleolytic cleavage in either 5'- to 3'- or 3'- to 5'-direction to yield nucleoside 5'-phosphates.. Its function is as follows. Bidirectionally degrades single-stranded DNA into large acid-insoluble oligonucleotides, which are then degraded further into small acid-soluble oligonucleotides. The protein is Exodeoxyribonuclease 7 large subunit of Brucella canis (strain ATCC 23365 / NCTC 10854 / RM-666).